The chain runs to 198 residues: Na(+)-translocating NADH-quinone reductase subunit E (198 aa).

6 consecutive transmembrane segments (helical) span residues 11–31 (SIFI…FLAV), 39–59 (FGLG…NNLV), 77–97 (FLNF…LEMV), 110–130 (GIFL…SFMV), 140–160 (IVYG…LAGI), and 176–196 (LGIT…FSGV).

The protein belongs to the NqrDE/RnfAE family. Composed of six subunits; NqrA, NqrB, NqrC, NqrD, NqrE and NqrF. In terms of processing, the N-terminus is blocked.

It is found in the cell inner membrane. The catalysed reaction is a ubiquinone + n Na(+)(in) + NADH + H(+) = a ubiquinol + n Na(+)(out) + NAD(+). With respect to regulation, this reaction is tightly coupled to the Na(+) pumping activity and specifically requires Na(+) for activity. Inhibited by korormicin and 2-N-heptyl-4-hydroxyquinoline N-oxide (HQNO). Its function is as follows. NQR complex catalyzes the reduction of ubiquinone-1 to ubiquinol by two successive reactions, coupled with the transport of Na(+) ions from the cytoplasm to the periplasm. NqrA to NqrE are probably involved in the second step, the conversion of ubisemiquinone to ubiquinol. In Vibrio alginolyticus, this protein is Na(+)-translocating NADH-quinone reductase subunit E.